A 403-amino-acid chain; its full sequence is S-adenosylmethionine synthase (403 aa).

H17 lines the ATP pocket. Residue D19 coordinates Mg(2+). E45 lines the K(+) pocket. The L-methionine site is built by E58 and Q104. The interval 104–114 (QSSDIAQGVNT) is flexible loop. ATP-binding positions include 179–181 (DGK), 250–251 (KF), D259, 265–266 (RK), A282, and K286. Residue D259 participates in L-methionine binding. K290 provides a ligand contact to L-methionine.

Belongs to the AdoMet synthase family. In terms of assembly, homotetramer; dimer of dimers. Mg(2+) serves as cofactor. Requires K(+) as cofactor.

It localises to the cytoplasm. The catalysed reaction is L-methionine + ATP + H2O = S-adenosyl-L-methionine + phosphate + diphosphate. Its pathway is amino-acid biosynthesis; S-adenosyl-L-methionine biosynthesis; S-adenosyl-L-methionine from L-methionine: step 1/1. Its function is as follows. Catalyzes the formation of S-adenosylmethionine (AdoMet) from methionine and ATP. The overall synthetic reaction is composed of two sequential steps, AdoMet formation and the subsequent tripolyphosphate hydrolysis which occurs prior to release of AdoMet from the enzyme. This chain is S-adenosylmethionine synthase, found in Mycobacterium leprae (strain Br4923).